The primary structure comprises 32 residues: Alpha-amylase inhibitor AAI (32 aa).

Cystine bridges form between C1/C18, C8/C23, and C17/C31.

In terms of tissue distribution, endosperm.

Its function is as follows. Alpha-amylase inhibitor. It is active against alpha-amylases from Tribolium castaneum and Prostephanus truncatus larvae. The protein is Alpha-amylase inhibitor AAI (AAI) of Amaranthus hypochondriacus (Prince-of-Wales feather).